A 147-amino-acid chain; its full sequence is Putative HTH-type transcriptional regulator slr0846 (147 aa).

The region spanning 2–130 (KLTTKSHYSV…YSITLADLYY (129 aa)) is the HTH rrf2-type domain.

This is Putative HTH-type transcriptional regulator slr0846 from Synechocystis sp. (strain ATCC 27184 / PCC 6803 / Kazusa).